The primary structure comprises 161 residues: S-ribosylhomocysteine lyase (161 aa).

Fe cation is bound by residues His-53, His-57, and Cys-124.

This sequence belongs to the LuxS family. Homodimer. Fe cation is required as a cofactor.

It catalyses the reaction S-(5-deoxy-D-ribos-5-yl)-L-homocysteine = (S)-4,5-dihydroxypentane-2,3-dione + L-homocysteine. Functionally, involved in the synthesis of autoinducer 2 (AI-2) which is secreted by bacteria and is used to communicate both the cell density and the metabolic potential of the environment. The regulation of gene expression in response to changes in cell density is called quorum sensing. Catalyzes the transformation of S-ribosylhomocysteine (RHC) to homocysteine (HC) and 4,5-dihydroxy-2,3-pentadione (DPD). The sequence is that of S-ribosylhomocysteine lyase from Phocaeicola vulgatus (strain ATCC 8482 / DSM 1447 / JCM 5826 / CCUG 4940 / NBRC 14291 / NCTC 11154) (Bacteroides vulgatus).